The chain runs to 32 residues: Natriuretic peptide Coa_NP1 (32 aa).

C8 and C24 are joined by a disulfide.

Belongs to the natriuretic peptide family. Snake NP subfamily. Expressed by the venom gland.

It is found in the secreted. In terms of biological role, snake venom natriuretic peptide that exhibits hypotensive and vasodepressor activity in rats. The polypeptide is Natriuretic peptide Coa_NP1 (Crotalus lutosus abyssus (Grand Canyon rattlesnake)).